The primary structure comprises 86 residues: Conidiation-specific protein 10 (86 aa).

Residues methionine 1–asparagine 11 are compositionally biased toward polar residues. Positions methionine 1–glutamate 86 are disordered. The span at serine 49–serine 58 shows a compositional bias: low complexity. Residues glycine 62 to arginine 71 show a composition bias toward basic and acidic residues. Residues lysine 75–glutamate 86 are compositionally biased toward gly residues.

This sequence belongs to the con-10 family.

This is Conidiation-specific protein 10 (con-10) from Neurospora crassa (strain ATCC 24698 / 74-OR23-1A / CBS 708.71 / DSM 1257 / FGSC 987).